The sequence spans 307 residues: MIKKRSILIVTRKSPLALWQAEFVKQQIENSHPHLACQILGCTTQGDRLTTEKLVDSGGKDLFVKDLQKALLNRDADIAVHSIKDMSACDGPELMVGAFIRREDPRDVLIVKGELSTLPPHAVIGTSSPRRQCQLKKFQPGCKIKEIRGNVGTRLAKLDAGHYEAIVLAAAGLKRLGLENRIHYYFDPHEFIPAIGQGAIGVECRSDDHEMQTLLKSLDHRETRLCVTAERAVNEKLGGDCFTPIAAHAIIKNDQLSLFAMLGKIDGRVIIRATEIGNSEEAKRIGFKVASQLLEQGGDSLLRELKQ.

Cys-241 carries the S-(dipyrrolylmethanemethyl)cysteine modification.

It belongs to the HMBS family. In terms of assembly, monomer. Dipyrromethane is required as a cofactor.

The catalysed reaction is 4 porphobilinogen + H2O = hydroxymethylbilane + 4 NH4(+). The protein operates within porphyrin-containing compound metabolism; protoporphyrin-IX biosynthesis; coproporphyrinogen-III from 5-aminolevulinate: step 2/4. Functionally, tetrapolymerization of the monopyrrole PBG into the hydroxymethylbilane pre-uroporphyrinogen in several discrete steps. The polypeptide is Porphobilinogen deaminase (Coxiella burnetii (strain CbuG_Q212) (Coxiella burnetii (strain Q212))).